We begin with the raw amino-acid sequence, 358 residues long: 3-dehydroquinate synthase (358 aa).

NAD(+) is bound by residues 102–106, 126–127, lysine 138, and lysine 147; these read GVVGD and TT. Zn(2+) contacts are provided by glutamate 180, histidine 243, and histidine 260.

Belongs to the sugar phosphate cyclases superfamily. Dehydroquinate synthase family. Co(2+) is required as a cofactor. Requires Zn(2+) as cofactor. NAD(+) serves as cofactor.

The protein localises to the cytoplasm. It carries out the reaction 7-phospho-2-dehydro-3-deoxy-D-arabino-heptonate = 3-dehydroquinate + phosphate. It participates in metabolic intermediate biosynthesis; chorismate biosynthesis; chorismate from D-erythrose 4-phosphate and phosphoenolpyruvate: step 2/7. Catalyzes the conversion of 3-deoxy-D-arabino-heptulosonate 7-phosphate (DAHP) to dehydroquinate (DHQ). This is 3-dehydroquinate synthase from Shouchella clausii (strain KSM-K16) (Alkalihalobacillus clausii).